A 144-amino-acid chain; its full sequence is Antigenic protein SchS21 (144 aa).

An N-linked (GlcNAc...) asparagine glycan is attached at N36. The igE-binding epitope stretch occupies residues 91 to 105 (VKQMWPAESRKPMSG).

In terms of assembly, homodimer. Mg(2+) is required as a cofactor.

The protein resides in the secreted. Functionally, has exodeoxyribonuclease activity with lambda-DNA and salmon testes dsDNA. No activity with circular plasmid DNA. The physiological role of this enzyme may be to degrade environmental DNA, and thus mobilize nitrogen for uptake. This is Antigenic protein SchS21 from Stachybotrys chartarum (Toxic black mold).